Here is a 245-residue protein sequence, read N- to C-terminus: tRNA pseudouridine synthase A (245 aa).

The active-site Nucleophile is aspartate 52. Tyrosine 111 is a substrate binding site.

The protein belongs to the tRNA pseudouridine synthase TruA family. As to quaternary structure, homodimer.

It catalyses the reaction uridine(38/39/40) in tRNA = pseudouridine(38/39/40) in tRNA. In terms of biological role, formation of pseudouridine at positions 38, 39 and 40 in the anticodon stem and loop of transfer RNAs. In Rhodospirillum centenum (strain ATCC 51521 / SW), this protein is tRNA pseudouridine synthase A.